A 290-amino-acid chain; its full sequence is Shikimate dehydrogenase (NADP(+)) (290 aa).

Shikimate is bound by residues 24–26 (SLS) and threonine 71. Lysine 75 acts as the Proton acceptor in catalysis. Shikimate contacts are provided by asparagine 96 and aspartate 111. NADP(+) is bound by residues 136–140 (GAGGA), 160–165 (NRTVDR), and leucine 233. Tyrosine 235 lines the shikimate pocket. An NADP(+)-binding site is contributed by glycine 256.

It belongs to the shikimate dehydrogenase family. As to quaternary structure, homodimer.

It carries out the reaction shikimate + NADP(+) = 3-dehydroshikimate + NADPH + H(+). It functions in the pathway metabolic intermediate biosynthesis; chorismate biosynthesis; chorismate from D-erythrose 4-phosphate and phosphoenolpyruvate: step 4/7. Functionally, involved in the biosynthesis of the chorismate, which leads to the biosynthesis of aromatic amino acids. Catalyzes the reversible NADPH linked reduction of 3-dehydroshikimate (DHSA) to yield shikimate (SA). The protein is Shikimate dehydrogenase (NADP(+)) of Methanopyrus kandleri (strain AV19 / DSM 6324 / JCM 9639 / NBRC 100938).